The primary structure comprises 270 residues: Phosphatidylglycerol--prolipoprotein diacylglyceryl transferase (270 aa).

A run of 7 helical transmembrane segments spans residues 14–34, 60–80, 103–123, 133–153, 181–201, 209–229, and 235–255; these read VAFT…ILAL, YFFW…IAIY, FVGI…LATI, LWQL…FGRI, PSQL…LFFY, GELI…CEFF, and GIGF…LMFF. Residue Arg152 coordinates a 1,2-diacyl-sn-glycero-3-phospho-(1'-sn-glycerol).

It belongs to the Lgt family.

It localises to the cell inner membrane. It catalyses the reaction L-cysteinyl-[prolipoprotein] + a 1,2-diacyl-sn-glycero-3-phospho-(1'-sn-glycerol) = an S-1,2-diacyl-sn-glyceryl-L-cysteinyl-[prolipoprotein] + sn-glycerol 1-phosphate + H(+). It functions in the pathway protein modification; lipoprotein biosynthesis (diacylglyceryl transfer). Its function is as follows. Catalyzes the transfer of the diacylglyceryl group from phosphatidylglycerol to the sulfhydryl group of the N-terminal cysteine of a prolipoprotein, the first step in the formation of mature lipoproteins. The polypeptide is Phosphatidylglycerol--prolipoprotein diacylglyceryl transferase (Campylobacter curvus (strain 525.92)).